Here is a 248-residue protein sequence, read N- to C-terminus: MSAATAPERGWKSEKVDEAQALARSCAARRPDFQPCDGLSICATHSHGKCFKLHWCCHLGWCHCKYVYQPMTPVEQLPSTEIPAKPREPTNTIQISVSLTEHFLKFASVFQPPLPPDSPRYCMISDLFIDNYQVKCINGKMCYVQKQQAPHSQKMSPEEVSAHDALISKESDTPKLGHCSSPSGSEDSGINAIGAHYVESCDEDTEEGAELSSEEDYSPESSWEPDECTLLSPSQSDLEVIETMETTV.

The disordered stretch occupies residues 169–248; that stretch reads KESDTPKLGH…EVIETMETTV (80 aa). Residues 200-227 show a composition bias toward acidic residues; it reads SCDEDTEEGAELSSEEDYSPESSWEPDE.

This sequence belongs to the UPF0524 family.

May play a role in neuronal and neurobehavioral development. In Mus musculus (Mouse), this protein is UPF0524 protein C3orf70 homolog.